We begin with the raw amino-acid sequence, 243 residues long: Phosphoribosyl isomerase A (243 aa).

D9 acts as the Proton acceptor in catalysis. The Proton donor role is filled by D128.

The protein belongs to the HisA/HisF family.

It is found in the cytoplasm. The enzyme catalyses 1-(5-phospho-beta-D-ribosyl)-5-[(5-phospho-beta-D-ribosylamino)methylideneamino]imidazole-4-carboxamide = 5-[(5-phospho-1-deoxy-D-ribulos-1-ylimino)methylamino]-1-(5-phospho-beta-D-ribosyl)imidazole-4-carboxamide. It catalyses the reaction N-(5-phospho-beta-D-ribosyl)anthranilate = 1-(2-carboxyphenylamino)-1-deoxy-D-ribulose 5-phosphate. The protein operates within amino-acid biosynthesis; L-histidine biosynthesis; L-histidine from 5-phospho-alpha-D-ribose 1-diphosphate: step 4/9. It functions in the pathway amino-acid biosynthesis; L-tryptophan biosynthesis; L-tryptophan from chorismate: step 3/5. In terms of biological role, involved in both the histidine and tryptophan biosynthetic pathways. This Mycolicibacterium paratuberculosis (strain ATCC BAA-968 / K-10) (Mycobacterium paratuberculosis) protein is Phosphoribosyl isomerase A.